Consider the following 668-residue polypeptide: UvrABC system protein B (668 aa).

The Helicase ATP-binding domain maps to A27–R413. Residue G40–T47 coordinates ATP. Positions Y93–I116 match the Beta-hairpin motif. In terms of domain architecture, Helicase C-terminal spans Q430 to I596. The UVR domain occupies P628–R663.

The protein belongs to the UvrB family. In terms of assembly, forms a heterotetramer with UvrA during the search for lesions. Interacts with UvrC in an incision complex.

Its subcellular location is the cytoplasm. Its function is as follows. The UvrABC repair system catalyzes the recognition and processing of DNA lesions. A damage recognition complex composed of 2 UvrA and 2 UvrB subunits scans DNA for abnormalities. Upon binding of the UvrA(2)B(2) complex to a putative damaged site, the DNA wraps around one UvrB monomer. DNA wrap is dependent on ATP binding by UvrB and probably causes local melting of the DNA helix, facilitating insertion of UvrB beta-hairpin between the DNA strands. Then UvrB probes one DNA strand for the presence of a lesion. If a lesion is found the UvrA subunits dissociate and the UvrB-DNA preincision complex is formed. This complex is subsequently bound by UvrC and the second UvrB is released. If no lesion is found, the DNA wraps around the other UvrB subunit that will check the other stand for damage. The sequence is that of UvrABC system protein B from Thermosynechococcus vestitus (strain NIES-2133 / IAM M-273 / BP-1).